The primary structure comprises 368 residues: UDP-N-acetylglucosamine--N-acetylmuramyl-(pentapeptide) pyrophosphoryl-undecaprenol N-acetylglucosamine transferase (368 aa).

UDP-N-acetyl-alpha-D-glucosamine is bound by residues 14-16, Asn-125, Arg-168, Ser-196, and Gln-297; that span reads TGG.

This sequence belongs to the glycosyltransferase 28 family. MurG subfamily.

Its subcellular location is the cell inner membrane. The catalysed reaction is di-trans,octa-cis-undecaprenyl diphospho-N-acetyl-alpha-D-muramoyl-L-alanyl-D-glutamyl-meso-2,6-diaminopimeloyl-D-alanyl-D-alanine + UDP-N-acetyl-alpha-D-glucosamine = di-trans,octa-cis-undecaprenyl diphospho-[N-acetyl-alpha-D-glucosaminyl-(1-&gt;4)]-N-acetyl-alpha-D-muramoyl-L-alanyl-D-glutamyl-meso-2,6-diaminopimeloyl-D-alanyl-D-alanine + UDP + H(+). It functions in the pathway cell wall biogenesis; peptidoglycan biosynthesis. In terms of biological role, cell wall formation. Catalyzes the transfer of a GlcNAc subunit on undecaprenyl-pyrophosphoryl-MurNAc-pentapeptide (lipid intermediate I) to form undecaprenyl-pyrophosphoryl-MurNAc-(pentapeptide)GlcNAc (lipid intermediate II). The sequence is that of UDP-N-acetylglucosamine--N-acetylmuramyl-(pentapeptide) pyrophosphoryl-undecaprenol N-acetylglucosamine transferase from Nitrobacter winogradskyi (strain ATCC 25391 / DSM 10237 / CIP 104748 / NCIMB 11846 / Nb-255).